The sequence spans 150 residues: Putative biopolymer transport protein ExbB-like 2 (150 aa).

A run of 3 helical transmembrane segments spans residues 5-25 (VDYGIIGFLIFLSVIVIAIAI), 63-83 (APYIGLLGTVMGIMLTFMDLG), and 97-117 (LALALKATGMGLLVAIPAIVI).

Belongs to the ExbB/TolQ family.

The protein localises to the cell inner membrane. The chain is Putative biopolymer transport protein ExbB-like 2 from Helicobacter pylori (strain ATCC 700392 / 26695) (Campylobacter pylori).